We begin with the raw amino-acid sequence, 192 residues long: Protein GrpE (192 aa).

The segment covering 1–20 (MEERNEQVVEEVKEEVKEAQ) has biased composition (basic and acidic residues). A disordered region spans residues 1 to 34 (MEERNEQVVEEVKEEVKEAQVEEAVTSEDSEETV). The segment covering 25-34 (VTSEDSEETV) has biased composition (acidic residues).

Belongs to the GrpE family. In terms of assembly, homodimer.

Its subcellular location is the cytoplasm. In terms of biological role, participates actively in the response to hyperosmotic and heat shock by preventing the aggregation of stress-denatured proteins, in association with DnaK and GrpE. It is the nucleotide exchange factor for DnaK and may function as a thermosensor. Unfolded proteins bind initially to DnaJ; upon interaction with the DnaJ-bound protein, DnaK hydrolyzes its bound ATP, resulting in the formation of a stable complex. GrpE releases ADP from DnaK; ATP binding to DnaK triggers the release of the substrate protein, thus completing the reaction cycle. Several rounds of ATP-dependent interactions between DnaJ, DnaK and GrpE are required for fully efficient folding. This chain is Protein GrpE, found in Bacillus cereus (strain AH187).